Consider the following 543-residue polypeptide: Chaperonin GroEL 1 (543 aa).

ATP-binding positions include 29 to 32 (TLGP), 86 to 90 (DGTTT), G413, 479 to 481 (NAA), and D495. The interval 524-543 (PEPKDAAPAGVGGGGGDFDY) is disordered. Gly residues predominate over residues 533–543 (GVGGGGGDFDY).

This sequence belongs to the chaperonin (HSP60) family. Forms a cylinder of 14 subunits composed of two heptameric rings stacked back-to-back. Interacts with the co-chaperonin GroES.

It localises to the cytoplasm. It catalyses the reaction ATP + H2O + a folded polypeptide = ADP + phosphate + an unfolded polypeptide.. Together with its co-chaperonin GroES, plays an essential role in assisting protein folding. The GroEL-GroES system forms a nano-cage that allows encapsulation of the non-native substrate proteins and provides a physical environment optimized to promote and accelerate protein folding. The chain is Chaperonin GroEL 1 from Anabaena sp. (strain L31).